The chain runs to 239 residues: Uridylate kinase (239 aa).

13 to 16 (KVSG) is an ATP binding site. Gly55 provides a ligand contact to UMP. Residues Gly56 and Arg60 each coordinate ATP. Residues Asp75 and 136-143 (TGNPFFTT) contribute to the UMP site. Residues Thr163, Gln164, Tyr169, and Asp172 each contribute to the ATP site.

This sequence belongs to the UMP kinase family. As to quaternary structure, homohexamer.

It localises to the cytoplasm. It carries out the reaction UMP + ATP = UDP + ADP. It participates in pyrimidine metabolism; CTP biosynthesis via de novo pathway; UDP from UMP (UMPK route): step 1/1. Its activity is regulated as follows. Inhibited by UTP. Its function is as follows. Catalyzes the reversible phosphorylation of UMP to UDP. The chain is Uridylate kinase from Bartonella bacilliformis (strain ATCC 35685 / KC583 / Herrer 020/F12,63).